Consider the following 1212-residue polypeptide: Filamin-A-interacting protein 1 (1212 aa).

A compositionally biased stretch (polar residues) spans 1–15 (MRSRNQGGESSSNGH). The interval 1 to 73 (MRSRNQGGES…SEKKTKKSVE (73 aa)) is disordered. Composition is skewed to basic and acidic residues over residues 32-47 (PSED…KEED) and 60-73 (PSGE…KSVE). Ser137 carries the post-translational modification Phosphoserine. Coiled-coil stretches lie at residues 191–575 (DYMN…DELM) and 623–777 (PEDN…ELEL). 2 disordered regions span residues 871 to 898 (WMRK…HPGE) and 948 to 975 (KPRI…GPER). Ser978 is modified (phosphoserine). Residues 1102–1190 (VSTGTVLRSP…TKFQPRAETQ (89 aa)) form a disordered region. Residues 1124-1138 (VTSTITITPVTTSST) show a composition bias toward low complexity. The segment covering 1139 to 1155 (RGTQSVSGQDGSSQRPT) has biased composition (polar residues).

Belongs to the FILIP1 family. In terms of assembly, interacts with FLNA. Interacts with RHOD (in GTP-bound form). Expressed in muscle tissue, including heart. Found in cortical ventricular zone.

The protein localises to the cytoplasm. The protein resides in the cytoskeleton. It localises to the stress fiber. By acting through a filamin-A/F-actin axis, it controls the start of neocortical cell migration from the ventricular zone. May be able to induce the degradation of Filamin A. This Rattus norvegicus (Rat) protein is Filamin-A-interacting protein 1 (Filip1).